The chain runs to 37 residues: Large ribosomal subunit protein bL36 (37 aa).

The protein belongs to the bacterial ribosomal protein bL36 family.

The sequence is that of Large ribosomal subunit protein bL36 from Aquifex aeolicus (strain VF5).